A 59-amino-acid chain; its full sequence is Photosystem II reaction center protein K (59 aa).

A propeptide spanning residues 1 to 22 (MLNIFSLICLNSALYPSSLFFA) is cleaved from the precursor. Residues 38 to 58 (MPVIPLFFFLLAFVWQAAVSF) form a helical membrane-spanning segment.

This sequence belongs to the PsbK family. As to quaternary structure, PSII is composed of 1 copy each of membrane proteins PsbA, PsbB, PsbC, PsbD, PsbE, PsbF, PsbH, PsbI, PsbJ, PsbK, PsbL, PsbM, PsbT, PsbX, PsbY, PsbZ, Psb30/Ycf12, at least 3 peripheral proteins of the oxygen-evolving complex and a large number of cofactors. It forms dimeric complexes.

It localises to the plastid. The protein localises to the chloroplast thylakoid membrane. One of the components of the core complex of photosystem II (PSII). PSII is a light-driven water:plastoquinone oxidoreductase that uses light energy to abstract electrons from H(2)O, generating O(2) and a proton gradient subsequently used for ATP formation. It consists of a core antenna complex that captures photons, and an electron transfer chain that converts photonic excitation into a charge separation. The sequence is that of Photosystem II reaction center protein K from Lactuca sativa (Garden lettuce).